A 145-amino-acid chain; its full sequence is uncharacterized protein (145 aa).

Disordered regions lie at residues 1–41 and 122–145; these read MRRL…PPGT and RLPSLVHGPSHPDSQHPREVPLAL. Over residues 20–34 the composition is skewed to polar residues; sequence GGPQNGTSGCTTAPQ. Basic and acidic residues predominate over residues 134-145; that stretch reads DSQHPREVPLAL.

As to expression, ubiquitous.

This is an uncharacterized protein from Homo sapiens (Human).